A 333-amino-acid chain; its full sequence is MVSSTSQIISTSPSRDDVVPSRKKVTLPPWLEVAKPRLIPLLLATTLGGMALSEGWPLPSPRLACTLGGGALAAAAAGALNCLWEQDLDGRMKRTSSRALPAGKLSPSAVFTGAISCTLAAAALLVSGVNCLAAGLSLLGLCSYVLLYTAFLKPRTSQNIVIGGVAGAIPPLVGAAAATGHIGLSGWWLFALVMVWTPAHFWALAILLKDDYRSVGIPMLPVVKGSVFTAKAIAQYGWATVLLSCFGVFALPEGGALYGILLVPFNVRLLQMVRRLAADPEDLQRAKGLFRWSILYMFGICLLLVVSRSTLADQFHNQAIYLFTNMGSVFSIA.

Low complexity predominate over residues 1 to 13 (MVSSTSQIISTSP). Residues 1–21 (MVSSTSQIISTSPSRDDVVPS) form a disordered region. Helical transmembrane passes span 38–58 (LIPLLLATTLGGMALSEGWPL), 63–83 (LACTLGGGALAAAAAGALNCL), 109–129 (AVFTGAISCTLAAAALLVSGV), 132–152 (LAAGLSLLGLCSYVLLYTAFL), 160–180 (IVIGGVAGAIPPLVGAAAATG), 188–208 (WLFALVMVWTPAHFWALAILL), 245–265 (CFGVFALPEGGALYGILLVPF), and 286–306 (AKGLFRWSILYMFGICLLLVV).

Belongs to the UbiA prenyltransferase family. Protoheme IX farnesyltransferase subfamily.

Its subcellular location is the cell inner membrane. The enzyme catalyses heme b + (2E,6E)-farnesyl diphosphate + H2O = Fe(II)-heme o + diphosphate. The protein operates within porphyrin-containing compound metabolism; heme O biosynthesis; heme O from protoheme: step 1/1. Its function is as follows. Converts heme B (protoheme IX) to heme O by substitution of the vinyl group on carbon 2 of heme B porphyrin ring with a hydroxyethyl farnesyl side group. The polypeptide is Protoheme IX farnesyltransferase (Prochlorococcus marinus (strain SARG / CCMP1375 / SS120)).